A 318-amino-acid chain; its full sequence is Thioredoxin reductase (318 aa).

36-43 (TGMQQGGQ) provides a ligand contact to FAD. A disulfide bridge links Cys-136 with Cys-139. 286 to 295 (DVMDHNYRQA) provides a ligand contact to FAD.

This sequence belongs to the class-II pyridine nucleotide-disulfide oxidoreductase family. As to quaternary structure, homodimer. FAD serves as cofactor.

Its subcellular location is the cytoplasm. The enzyme catalyses [thioredoxin]-dithiol + NADP(+) = [thioredoxin]-disulfide + NADPH + H(+). The polypeptide is Thioredoxin reductase (trxB) (Vibrio cholerae serotype O1 (strain ATCC 39315 / El Tor Inaba N16961)).